We begin with the raw amino-acid sequence, 442 residues long: ATP-dependent RNA helicase SUB2 (442 aa).

The Q motif motif lies at Thr59–Gln87. One can recognise a Helicase ATP-binding domain in the interval Ile90 to Ile265. Ala103–Thr110 serves as a coordination point for ATP. The short motif at Asp212–Asp215 is the DECD box element. The 162-residue stretch at Gly277–Thr438 folds into the Helicase C-terminal domain.

It belongs to the DEAD box helicase family. DECD subfamily.

The protein resides in the nucleus. It carries out the reaction ATP + H2O = ADP + phosphate + H(+). ATP-binding RNA helicase involved in transcription elongation and required for the export of mRNA out of the nucleus. SUB2 also plays a role in pre-mRNA splicing and spliceosome assembly. May be involved in rDNA and telomeric silencing, and maintenance of genome integrity. This is ATP-dependent RNA helicase SUB2 (SUB2) from Cryptococcus neoformans var. neoformans serotype D (strain JEC21 / ATCC MYA-565) (Filobasidiella neoformans).